The chain runs to 472 residues: Squamosa promoter-binding-like protein 18 (472 aa).

Residues 89–110 (AKVPPSTSTLKRPRGGGGGGGG) form a disordered region. The segment at 112-189 (CPSCAVDGCK…DGHNRRRRKP (78 aa)) adopts an SBP-type zinc-finger fold. Positions 115, 120, 137, 140, 156, 159, 163, and 175 each coordinate Zn(2+). The Bipartite nuclear localization signal signature appears at 172 to 188 (KRSCRKRLDGHNRRRRK). Disordered stretches follow at residues 179–218 (LDGH…RPEP), 233–261 (SHHH…TAAF), and 358–381 (SVDV…HHHH). Residues 192–209 (DSMSSGSFMTSQQGTRFA) show a composition bias toward polar residues. Over residues 252–261 (SPSSATTAAF) the composition is skewed to low complexity.

In terms of tissue distribution, expressed in young panicles.

The protein resides in the nucleus. Its function is as follows. Trans-acting factor that binds specifically to the consensus nucleotide sequence 5'-TNCGTACAA-3'. May be involved in panicle development. The protein is Squamosa promoter-binding-like protein 18 (SPL18) of Oryza sativa subsp. japonica (Rice).